Reading from the N-terminus, the 287-residue chain is PAK4-inhibitor INKA1 (287 aa).

2 disordered regions span residues 22–59 (GRDT…LEED) and 138–157 (SRAP…KSTP). The segment covering 35-50 (QPTSQTGPDVQPSHQL) has biased composition (polar residues). Positions 138–147 (SRAPVASVPP) are enriched in low complexity. 2 inka box regions span residues 168–205 (EAED…ELPE) and 261–287 (PADV…VSYL).

It belongs to the INKA family. In terms of assembly, interacts with PAK4.

The protein localises to the nucleus. It is found in the cytoplasm. Inhibitor of the serine/threonine-protein kinase PAK4. Acts by binding PAK4 in a substrate-like manner, inhibiting the protein kinase activity. This Homo sapiens (Human) protein is PAK4-inhibitor INKA1.